A 90-amino-acid polypeptide reads, in one-letter code: Acylphosphatase (90 aa).

The 86-residue stretch at serine 5–asparagine 90 folds into the Acylphosphatase-like domain. Catalysis depends on residues arginine 20 and asparagine 38.

Belongs to the acylphosphatase family.

It carries out the reaction an acyl phosphate + H2O = a carboxylate + phosphate + H(+). The sequence is that of Acylphosphatase (acyP) from Aeromonas hydrophila subsp. hydrophila (strain ATCC 7966 / DSM 30187 / BCRC 13018 / CCUG 14551 / JCM 1027 / KCTC 2358 / NCIMB 9240 / NCTC 8049).